The sequence spans 422 residues: Cyclin-A2 (422 aa).

At Met-1 the chain carries N-acetylmethionine. The tract at residues 1-62 (MPGTSRHSGR…APQQKLKTRR (62 aa)) is disordered. At Ser-5 the chain carries Phosphoserine.

Belongs to the cyclin family. Cyclin AB subfamily. Interacts with the CDK1 and CDK2 protein kinases to form serine/threonine kinase holoenzyme complexes. Interacts with CDK1 (hyperphosphorylated form in G1 and underphosphorylated forms in S and G2). Interacts with CDK2; the interaction increases from G1 to G2. Interacts (associated with CDK2 but not with CDK1) with SCAPER; regulates the activity of CCNA2/CDK2 by transiently maintaining CCNA2 in the cytoplasm. Forms a ternary complex with CDK2 and CDKN1B; CDKN1B inhibits the kinase activity of CDK2 through conformational rearrangements. Interacts with INCA1. As to quaternary structure, (Microbial infection) Interacts with mouse cytomegalovirus/MCMV kinase M97; this interaction sequesters CCNA2 to the cytoplasm. Polyubiquitinated via 'Lys-11'-linked ubiquitin by the anaphase-promoting complex (APC/C), leading to its degradation by the proteasome. Deubiquitinated and stabilized by USP37 enables entry into S phase. Ubiquitinated during the G1 phase by the SCF(FBXO31) complex, leading to its proteasomal degradation. Ubiquitous. In the testis, expressed in germ cells and in the ovary, in both germline and somatic cells.

It localises to the nucleus. Its subcellular location is the cytoplasm. Its function is as follows. Cyclin which controls both the G1/S and the G2/M transition phases of the cell cycle. Functions through the formation of specific serine/threonine kinase holoenzyme complexes with the cyclin-dependent protein kinases CDK1 and CDK2. The cyclin subunit confers the substrate specificity of these complexes and differentially interacts with and activates CDK1 and CDK2 throughout the cell cycle. The polypeptide is Cyclin-A2 (Mus musculus (Mouse)).